Consider the following 435-residue polypeptide: MVLPTLAIVGRPNVGKSTIFNRILGERVSIVEDTPGVTRDRIYGTSEWLGKEFAVIDTGGIDLGDEPFLAQIKDQAEIAIDEADVILFLADIESGVTDADERVAQILYRAKKPVVLAVNKVDNPERRQDIYDFYSLGFGEPYPLSGTHGIGLGDVLDAVLAAFPSEDKSVEDDSIKFSLIGRPNVGKSSLVNAILGENRVIVSPIEGTTRDAIDTKFEAVDETFTMIDTAGIRKRGKVYENTEKYAVMRALRAIDRSDVVLFVINAEEGIREQDKKVAGYAHEAGRGIIIVVNKWDTVEKDNHTMKDFENLIRQEFQYLDYAPIIFVSAKTKQRLQSLPAMIVAVSENQTRRIQSSVLNDVLMDAITVTPTPTVNGKRLRIYYMTQVAVKPPTFVVFVNDPDLLHFSYERFLINQLRQAFDFSGTPIHIIARKRK.

EngA-type G domains lie at 4–167 (PTLA…PSED) and 175–350 (IKFS…ENQT). GTP is bound by residues 10–17 (GRPNVGKS), 57–61 (DTGGI), 119–122 (NKVD), 181–188 (GRPNVGKS), 228–232 (DTAGI), and 293–296 (NKWD). The region spanning 351–435 (RRIQSSVLND…PIHIIARKRK (85 aa)) is the KH-like domain.

It belongs to the TRAFAC class TrmE-Era-EngA-EngB-Septin-like GTPase superfamily. EngA (Der) GTPase family. Associates with the 50S ribosomal subunit.

Its function is as follows. GTPase that plays an essential role in the late steps of ribosome biogenesis. The protein is GTPase Der of Lacticaseibacillus casei (strain BL23) (Lactobacillus casei).